The chain runs to 390 residues: Flagellar P-ring protein (390 aa).

An N-terminal signal peptide occupies residues 1–25 (MLLKKIFLTGIIVLDLVFFVSYGFA).

It belongs to the FlgI family. The basal body constitutes a major portion of the flagellar organelle and consists of four rings (L,P,S, and M) mounted on a central rod.

The protein localises to the periplasm. It localises to the bacterial flagellum basal body. Functionally, assembles around the rod to form the L-ring and probably protects the motor/basal body from shearing forces during rotation. The sequence is that of Flagellar P-ring protein from Syntrophus aciditrophicus (strain SB).